The sequence spans 361 residues: tRNA/tmRNA (uracil-C(5))-methyltransferase (361 aa).

S-adenosyl-L-methionine-binding residues include Gln-183, Tyr-211, Asn-216, Glu-232, and Asp-294. Cys-319 functions as the Nucleophile in the catalytic mechanism. Glu-353 (proton acceptor) is an active-site residue.

It belongs to the class I-like SAM-binding methyltransferase superfamily. RNA M5U methyltransferase family. TrmA subfamily.

The catalysed reaction is uridine(54) in tRNA + S-adenosyl-L-methionine = 5-methyluridine(54) in tRNA + S-adenosyl-L-homocysteine + H(+). It carries out the reaction uridine(341) in tmRNA + S-adenosyl-L-methionine = 5-methyluridine(341) in tmRNA + S-adenosyl-L-homocysteine + H(+). In terms of biological role, dual-specificity methyltransferase that catalyzes the formation of 5-methyluridine at position 54 (m5U54) in all tRNAs, and that of position 341 (m5U341) in tmRNA (transfer-mRNA). In Acinetobacter baumannii (strain ACICU), this protein is tRNA/tmRNA (uracil-C(5))-methyltransferase.